A 417-amino-acid chain; its full sequence is Gamma-glutamyl phosphate reductase (417 aa).

It belongs to the gamma-glutamyl phosphate reductase family.

It is found in the cytoplasm. The enzyme catalyses L-glutamate 5-semialdehyde + phosphate + NADP(+) = L-glutamyl 5-phosphate + NADPH + H(+). It functions in the pathway amino-acid biosynthesis; L-proline biosynthesis; L-glutamate 5-semialdehyde from L-glutamate: step 2/2. Functionally, catalyzes the NADPH-dependent reduction of L-glutamate 5-phosphate into L-glutamate 5-semialdehyde and phosphate. The product spontaneously undergoes cyclization to form 1-pyrroline-5-carboxylate. This Erwinia tasmaniensis (strain DSM 17950 / CFBP 7177 / CIP 109463 / NCPPB 4357 / Et1/99) protein is Gamma-glutamyl phosphate reductase.